Reading from the N-terminus, the 284-residue chain is D-tagatose-1,6-bisphosphate aldolase subunit GatY (284 aa).

The active-site Proton donor is the aspartate 82. Residues histidine 83 and histidine 180 each coordinate Zn(2+). Glycine 181 contributes to the dihydroxyacetone phosphate binding site. Histidine 208 provides a ligand contact to Zn(2+). Residues 209–211 and 230–233 each bind dihydroxyacetone phosphate; these read GAS and NVAT.

Belongs to the class II fructose-bisphosphate aldolase family. TagBP aldolase GatY subfamily. As to quaternary structure, forms a complex with GatZ. Zn(2+) serves as cofactor.

The enzyme catalyses D-tagatofuranose 1,6-bisphosphate = D-glyceraldehyde 3-phosphate + dihydroxyacetone phosphate. The protein operates within carbohydrate metabolism; D-tagatose 6-phosphate degradation; D-glyceraldehyde 3-phosphate and glycerone phosphate from D-tagatose 6-phosphate: step 2/2. Catalytic subunit of the tagatose-1,6-bisphosphate aldolase GatYZ, which catalyzes the reversible aldol condensation of dihydroxyacetone phosphate (DHAP or glycerone-phosphate) with glyceraldehyde 3-phosphate (G3P) to produce tagatose 1,6-bisphosphate (TBP). Requires GatZ subunit for full activity and stability. Is involved in the catabolism of galactitol. This is D-tagatose-1,6-bisphosphate aldolase subunit GatY from Shigella flexneri serotype 5b (strain 8401).